A 326-amino-acid chain; its full sequence is MLEFETIDINLTKKKNLSQKEVDFIEDVIIVGSGPAGLTAGIYSVMSNYKAAILEGPEPGGQLTTTTEVYNYPGFKNGISGRNLMLNMREQVVNLGAKTFPETVFSIKRKGNIFYLYTENYIYKSKAVIIAVGSKPKKLETLKNSGLFWNKGISVCAICDGHLFKGKRVAVIGGGNTALSESIYLSKLVDKVYLIVRKNNLRAIAMLRDSVAKLPNIEILYNSEAIEVDGKSSVSSVKIFNKKDNVVYELEVSAVFMAVGYKPNTEFLKGFLDLDEEGFIVTKDVVKTSVDGVFSCGDVSNKLYAQAITAAAEGFIASVELGNFLK.

55–62 (EGPEPGGQ) contributes to the FAD binding site. Residues C156 and C159 are joined by a disulfide bond. 298-307 (DVSNKLYAQA) contributes to the FAD binding site.

The protein belongs to the class-II pyridine nucleotide-disulfide oxidoreductase family. As to quaternary structure, homodimer. FAD is required as a cofactor.

It localises to the cytoplasm. The enzyme catalyses [thioredoxin]-dithiol + NADP(+) = [thioredoxin]-disulfide + NADPH + H(+). In Borreliella burgdorferi (strain ATCC 35210 / DSM 4680 / CIP 102532 / B31) (Borrelia burgdorferi), this protein is Thioredoxin reductase (trxB).